The following is a 509-amino-acid chain: Sensor histidine kinase TrcS (509 aa).

2 helical membrane-spanning segments follow: residues 24 to 44 and 188 to 208; these read LLLG…VVSV and VALV…VVGY. Residues 207–269 form the HAMP domain; that stretch reads GYALRPLRRV…LLDNVDGALA (63 aa). Residues 284-502 form the Histidine kinase domain; that stretch reads DASHELRTPL…VFRVRLPMIE (219 aa). The residue at position 287 (H287) is a Phosphohistidine; by autocatalysis.

Requires a divalent metal cation as cofactor. Post-translationally, autophosphorylated.

The protein resides in the cell membrane. It carries out the reaction ATP + protein L-histidine = ADP + protein N-phospho-L-histidine.. Member of the two-component regulatory system TrcS/TrcR. Phosphorylates TrcR. The TrcR-TrcS regulatory system may act as a transition regulatory system involved in adapting to an intracellular environment and transitioning from latency to reactivation. This chain is Sensor histidine kinase TrcS, found in Mycobacterium tuberculosis (strain ATCC 25618 / H37Rv).